The following is a 392-amino-acid chain: MEDVTLHIVERPYSGYPDASSEGPEPTPGEARATEEPSGTGSDELIKSDQVNGVLVLSLLDKIIGAVDQIQLTQAQLEERQAEMEGAVQSIQGELSKLGKAHATTSNTVSKLLEKVRKVSVNVKTVRGSLERQAGQIKKLEVNEAELLRRRNFKVMIYQDEVKLPAKLSVSKSLKESEALPEKEGDELGEGERPEEDAAAIELSSDEAVEVEEVIEESRAERIKRSGLRRVDDFKKAFSKEKMEKTKVRTRENLEKTRLKTKENLEKTRHTLEKRMNKLGTRLVPVERREKLKTSRDKLRKSFTPDHVVYARSKTAVYKVPPFTFHVKKIREGEVEVLKATEMVEVGPDDDEVGAERGAETDLLRGSSPDVHTLLEITEESDAVLVDKSDSD.

Met1 is modified (N-acetylmethionine). The segment covering 1–10 (MEDVTLHIVE) has biased composition (basic and acidic residues). The segment at 1–45 (MEDVTLHIVERPYSGYPDASSEGPEPTPGEARATEEPSGTGSDEL) is disordered. A required for homotrimerization and for interaction with CAVIN2 and CAVIN3 region spans residues 1-100 (MEDVTLHIVE…IQGELSKLGK (100 aa)). Phosphoserine is present on residues Ser21 and Ser38. Thr40 is modified (phosphothreonine). A phosphoserine mark is found at Ser42 and Ser48. Positions 54–64 (VLVLSLLDKII) are nuclear export signal. The interval 55–77 (LVLSLLDKIIGAVDQIQLTQAQL) is leucine-zipper 1. Lys118 participates in a covalent cross-link: Glycyl lysine isopeptide (Lys-Gly) (interchain with G-Cter in SUMO2). Ser120 carries the phosphoserine modification. A Glycyl lysine isopeptide (Lys-Gly) (interchain with G-Cter in SUMO2) cross-link involves residue Lys124. Positions 138 to 154 (KKLEVNEAELLRRRNFK) are nuclear localization signal. Tyr158 is modified (phosphotyrosine). Lys163 is covalently cross-linked (Glycyl lysine isopeptide (Lys-Gly) (interchain with G-Cter in SUMO1); alternate). Residue Lys163 forms a Glycyl lysine isopeptide (Lys-Gly) (interchain with G-Cter in SUMO2); alternate linkage. A Glycyl lysine isopeptide (Lys-Gly) (interchain with G-Cter in SUMO2) cross-link involves residue Lys167. Positions 168 to 188 (LSVSKSLKESEALPEKEGDEL) are leucine-zipper 2. Ser169 and Ser171 each carry phosphoserine. Lys172 is covalently cross-linked (Glycyl lysine isopeptide (Lys-Gly) (interchain with G-Cter in SUMO2)). Ser173 and Ser177 each carry phosphoserine. Over residues 173 to 183 (SLKESEALPEK) the composition is skewed to basic and acidic residues. The disordered stretch occupies residues 173 to 198 (SLKESEALPEKEGDELGEGERPEEDA). A compositionally biased stretch (acidic residues) spans 184–198 (EGDELGEGERPEEDA). Positions 201 to 284 (IELSSDEAVE…RMNKLGTRLV (84 aa)) form a coiled coil. 2 positions are modified to phosphoserine: Ser204 and Ser205. The segment at 235 to 251 (KKAFSKEKMEKTKVRTR) is nuclear localization signal. The interval 259-299 (LKTKENLEKTRHTLEKRMNKLGTRLVPVERREKLKTSRDKL) is leucine-zipper 3. A Phosphoserine modification is found at Ser302. Thr304 is subject to Phosphothreonine. Tyr310 carries the phosphotyrosine modification. Lys328 is covalently cross-linked (Glycyl lysine isopeptide (Lys-Gly) (interchain with G-Cter in SUMO2)). The segment at 347 to 367 (GPDDDEVGAERGAETDLLRGS) is disordered. The span at 354–363 (GAERGAETDL) shows a compositional bias: basic and acidic residues. Ser367, Ser368, Ser381, Ser389, and Ser391 each carry phosphoserine.

The protein belongs to the CAVIN family. Component of the CAVIN complex composed of CAVIN1, CAVIN2, CAVIN3 and CAVIN4. Interacts with RNA polymerase I subunit POLR1A/RPA1 and TTF1. Binds the 3' end of pre-rRNA. Interacts with transcription factor ZNF148. Interacts with LIPE in the adipocyte cytoplasm. Interacts with CAV1, CAV3, CAVIN2, CAVIN3 and CAVIN4. Phosphorylated. Present in active and inactive forms. Changes in phosphorylation pattern may alter activity. Phosphorylation at Tyr-158 is essential for its function in the regulation of ribosomal transcriptional activity. Post-translationally, monoubiquitinated. Expressed in the adipocyte (at protein level). Expressed in all striated and smooth muscles tested including diaphragm, esophageal striated muscle, fibroblast, endocardial endothelium, epicardial mesothelium, intestinal smooth muscle, masseter, soleus muscle, vascular smooth muscle and white gastrocnemius muscle (at protein level). Expressed in the endothelium and perineural sheath (at protein level). Not expressed in hepatocytes.

It is found in the membrane. Its subcellular location is the caveola. It localises to the cell membrane. The protein localises to the microsome. The protein resides in the endoplasmic reticulum. It is found in the cytoplasm. Its subcellular location is the cytosol. It localises to the mitochondrion. The protein localises to the nucleus. In terms of biological role, plays an important role in caveolae formation and organization. Essential for the formation of caveolae in all tissues. Core component of the CAVIN complex which is essential for recruitment of the complex to the caveolae in presence of calveolin-1 (CAV1). Essential for normal oligomerization of CAV1. Promotes ribosomal transcriptional activity in response to metabolic challenges in the adipocytes and plays an important role in the formation of the ribosomal transcriptional loop. Dissociates transcription complexes paused by DNA-bound TTF1, thereby releasing both RNA polymerase I and pre-RNA from the template. The caveolae biogenesis pathway is required for the secretion of proteins such as GASK1A. The chain is Caveolae-associated protein 1 from Rattus norvegicus (Rat).